We begin with the raw amino-acid sequence, 238 residues long: Uridylate kinase (238 aa).

12–15 (KLSG) lines the ATP pocket. Glycine 54 serves as a coordination point for UMP. Positions 55 and 59 each coordinate ATP. Residues aspartate 74 and 135 to 142 (TGNPFFTT) each bind UMP. ATP is bound by residues threonine 162, tyrosine 168, and aspartate 171.

Belongs to the UMP kinase family. In terms of assembly, homohexamer.

It localises to the cytoplasm. It catalyses the reaction UMP + ATP = UDP + ADP. It functions in the pathway pyrimidine metabolism; CTP biosynthesis via de novo pathway; UDP from UMP (UMPK route): step 1/1. Inhibited by UTP. Its function is as follows. Catalyzes the reversible phosphorylation of UMP to UDP. In Bordetella bronchiseptica (strain ATCC BAA-588 / NCTC 13252 / RB50) (Alcaligenes bronchisepticus), this protein is Uridylate kinase.